A 111-amino-acid chain; its full sequence is Putative pterin-4-alpha-carbinolamine dehydratase (111 aa).

Belongs to the pterin-4-alpha-carbinolamine dehydratase family.

The enzyme catalyses (4aS,6R)-4a-hydroxy-L-erythro-5,6,7,8-tetrahydrobiopterin = (6R)-L-erythro-6,7-dihydrobiopterin + H2O. The sequence is that of Putative pterin-4-alpha-carbinolamine dehydratase from Alkaliphilus metalliredigens (strain QYMF).